The following is a 190-amino-acid chain: MATHHTLWMGLALLGVLGDLQAAPEAQVSVQPNFQQDKFLGRWFSAGLASNSSWLREKKAALSMCKSVVAPATDGGLNLTSTFLRKNQCETRTMLLQPAGSLGSYSYRSPHWGSTYSVSVVETDYDQYALLYSQGSKGPGEDFRMATLYSRTQTPRAELKEKFTAFCKAQGFTEDTIVFLPQTDKCMTEQ.

The signal sequence occupies residues 1–22; sequence MATHHTLWMGLALLGVLGDLQA. Serine 29 carries O-linked (GalNAc...) serine glycosylation. Asparagine 51 is a glycosylation site (N-linked (GlcNAc...) (complex) asparagine). The Nucleophile role is filled by cysteine 65. Asparagine 78 carries N-linked (GlcNAc...) (complex) asparagine glycosylation. Cysteine 89 and cysteine 186 are oxidised to a cystine.

Belongs to the calycin superfamily. Lipocalin family. As to quaternary structure, monomer. In terms of processing, N- and O-glycosylated. Both N-glycosylation recognition sites are almost quantitatively occupied by N-glycans of the biantennary complex type, with a considerable proportion of structures bearing a bisecting GlcNAc. N-glycan at Asn-78: dHex1Hex5HexNAc4. Agalacto structure as well as sialylated and nonsialylated oligosaccharides bearing alpha2-3- and/or alpha2-6-linked NeuNAc are present. Abundant in the brain and CNS, where it is expressed in tissues of the blood-brain barrier and secreted into the cerebro-spinal fluid. Abundantly expressed in the heart. In the male reproductive system, it is expressed in the testis, epididymis and prostate, and is secreted into the seminal fluid. Expressed in the eye and secreted into the aqueous humor. Lower levels detected in various tissue fluids such as serum, normal urine, ascitic fluid and tear fluid. Also found in a number of other organs including ovary, fimbriae of the fallopian tubes, kidney, leukocytes.

It is found in the rough endoplasmic reticulum. The protein resides in the nucleus membrane. It localises to the golgi apparatus. The protein localises to the cytoplasm. Its subcellular location is the perinuclear region. It is found in the secreted. It catalyses the reaction prostaglandin H2 = prostaglandin D2. Its function is as follows. Catalyzes the conversion of PGH2 to PGD2, a prostaglandin involved in smooth muscle contraction/relaxation and a potent inhibitor of platelet aggregation. Involved in a variety of CNS functions, such as sedation, NREM sleep and PGE2-induced allodynia, and may have an anti-apoptotic role in oligodendrocytes. Binds small non-substrate lipophilic molecules, including biliverdin, bilirubin, retinal, retinoic acid and thyroid hormone, and may act as a scavenger for harmful hydrophobic molecules and as a secretory retinoid and thyroid hormone transporter. Possibly involved in development and maintenance of the blood-brain, blood-retina, blood-aqueous humor and blood-testis barrier. It is likely to play important roles in both maturation and maintenance of the central nervous system and male reproductive system. Involved in PLA2G3-dependent maturation of mast cells. PLA2G3 is secreted by immature mast cells and acts on nearby fibroblasts upstream to PTDGS to synthesize PGD2, which in turn promotes mast cell maturation and degranulation via PTGDR. In Homo sapiens (Human), this protein is Prostaglandin-H2 D-isomerase (PTGDS).